The primary structure comprises 83 residues: Toxin CjTL8 (83 aa).

The N-terminal stretch at 1–20 is a signal peptide; the sequence is MSSAIKILALLMVLVALAQA. The propeptide occupies 21–44; that stretch reads KPRKDYRAYPDFDDKSVILEDDKR. Phenylalanine amide is present on phenylalanine 81.

Contains 3 disulfide bonds.

It is found in the secreted. Its subcellular location is the nematocyst. Functionally, in vivo, induces immediate paralysis on shrimps (C.multidentata), followed by death when high doses are injected. No activity is observed when injected into fly larvae (M.domestica). The protein is Toxin CjTL8 of Epiactis japonica (Sea anemone).